Consider the following 350-residue polypeptide: tRNA uridine(34) hydroxylase (350 aa).

Positions 146-240 constitute a Rhodanese domain; sequence DDPDAVFIDM…YARRAREQGL (95 aa). The Cysteine persulfide intermediate role is filled by Cys-200. The segment covering 319–328 has biased composition (basic and acidic residues); that stretch reads RRRRAGRENG. A disordered region spans residues 319-350; sequence RRRRAGRENGNKIFNKSRGRLNSKLSIPDPAE.

It belongs to the TrhO family.

It carries out the reaction uridine(34) in tRNA + AH2 + O2 = 5-hydroxyuridine(34) in tRNA + A + H2O. Catalyzes oxygen-dependent 5-hydroxyuridine (ho5U) modification at position 34 in tRNAs. This Salmonella schwarzengrund (strain CVM19633) protein is tRNA uridine(34) hydroxylase.